The following is a 186-amino-acid chain: Crossover junction endodeoxyribonuclease RuvC (186 aa).

Residues Asp7, Glu67, and Asp140 contribute to the active site. Residues Asp7, Glu67, and Asp140 each coordinate Mg(2+).

Belongs to the RuvC family. In terms of assembly, homodimer which binds Holliday junction (HJ) DNA. The HJ becomes 2-fold symmetrical on binding to RuvC with unstacked arms; it has a different conformation from HJ DNA in complex with RuvA. In the full resolvosome a probable DNA-RuvA(4)-RuvB(12)-RuvC(2) complex forms which resolves the HJ. It depends on Mg(2+) as a cofactor.

The protein localises to the cytoplasm. It catalyses the reaction Endonucleolytic cleavage at a junction such as a reciprocal single-stranded crossover between two homologous DNA duplexes (Holliday junction).. In terms of biological role, the RuvA-RuvB-RuvC complex processes Holliday junction (HJ) DNA during genetic recombination and DNA repair. Endonuclease that resolves HJ intermediates. Cleaves cruciform DNA by making single-stranded nicks across the HJ at symmetrical positions within the homologous arms, yielding a 5'-phosphate and a 3'-hydroxyl group; requires a central core of homology in the junction. The consensus cleavage sequence is 5'-(A/T)TT(C/G)-3'. Cleavage occurs on the 3'-side of the TT dinucleotide at the point of strand exchange. HJ branch migration catalyzed by RuvA-RuvB allows RuvC to scan DNA until it finds its consensus sequence, where it cleaves and resolves the cruciform DNA. The sequence is that of Crossover junction endodeoxyribonuclease RuvC from Chloroherpeton thalassium (strain ATCC 35110 / GB-78).